Here is a 102-residue protein sequence, read N- to C-terminus: NADH-quinone oxidoreductase subunit K 2 (102 aa).

The next 3 membrane-spanning stretches (helical) occupy residues 4–24, 30–50, and 62–82; these read ITPV…TVGV, IVII…NLIA, and IFAI…LGIL.

It belongs to the complex I subunit 4L family. As to quaternary structure, NDH-1 is composed of 14 different subunits. Subunits NuoA, H, J, K, L, M, N constitute the membrane sector of the complex.

Its subcellular location is the cell inner membrane. It catalyses the reaction a quinone + NADH + 5 H(+)(in) = a quinol + NAD(+) + 4 H(+)(out). NDH-1 shuttles electrons from NADH, via FMN and iron-sulfur (Fe-S) centers, to quinones in the respiratory chain. The immediate electron acceptor for the enzyme in this species is believed to be ubiquinone. Couples the redox reaction to proton translocation (for every two electrons transferred, four hydrogen ions are translocated across the cytoplasmic membrane), and thus conserves the redox energy in a proton gradient. In Solibacter usitatus (strain Ellin6076), this protein is NADH-quinone oxidoreductase subunit K 2.